Here is a 327-residue protein sequence, read N- to C-terminus: Olfactory receptor 6A2 (327 aa).

Residues 1–26 (MEWRNHSGRVSEFVLLGFPAPAPLQV) are Extracellular-facing. An N-linked (GlcNAc...) asparagine glycan is attached at Asn5. Residues 27–47 (LLFALLLLAYVLVLTENTLII) traverse the membrane as a helical segment. Residues 48 to 55 (MAIRNHST) are Cytoplasmic-facing. Residues 56–76 (LHKPMYFFLANMSFLEIWYVT) traverse the membrane as a helical segment. The Extracellular segment spans residues 77-104 (VTIPKMLAGFVGSKQDHGQLISFEGCMT). Residues Cys102 and Cys194 are joined by a disulfide bond. Residues 105-125 (QLYFFLGLGCTECVLLAVMAY) traverse the membrane as a helical segment. The Cytoplasmic segment spans residues 126 to 144 (DRYMAICYPLHYPVIVSGR). Residues 145-165 (LCVQMAAGSWAGGFGISMVKV) form a helical membrane-spanning segment. Over 166–201 (FLISGLSYCGPNIINHFFCDVSPLLNLSCTDMSTAE) the chain is Extracellular. N-linked (GlcNAc...) asparagine glycosylation occurs at Asn191. The chain crosses the membrane as a helical span at residues 202-222 (LTDFILAIFILLGPLSVTGAS). The Cytoplasmic segment spans residues 223-242 (YVAITGAVMHIPSAAGRYKA). A helical membrane pass occupies residues 243-263 (FSTCASHLTVVIIFYAASIFI). At 264 to 276 (YARPKALSAFDTN) the chain is on the extracellular side. The helical transmembrane segment at 277–297 (KLVSVLYAVIVPLLNPIIYCL) threads the bilayer. The Cytoplasmic segment spans residues 298–327 (RNQEVKRALCCTLHLYQHQDPDPKKASRNV).

It belongs to the G-protein coupled receptor 1 family.

It is found in the cell membrane. Its function is as follows. Odorant receptor. This is Olfactory receptor 6A2 (OR6A2) from Homo sapiens (Human).